The following is a 245-amino-acid chain: UPF0246 protein Ldb2075 (245 aa).

It belongs to the UPF0246 family.

The protein is UPF0246 protein Ldb2075 of Lactobacillus delbrueckii subsp. bulgaricus (strain ATCC 11842 / DSM 20081 / BCRC 10696 / JCM 1002 / NBRC 13953 / NCIMB 11778 / NCTC 12712 / WDCM 00102 / Lb 14).